The primary structure comprises 413 residues: uncharacterized protein (413 aa).

7 consecutive transmembrane segments (helical) span residues 10 to 32, 162 to 184, 189 to 211, 232 to 254, 259 to 276, 288 to 310, and 325 to 347; these read GLTIHLSLFLLSLLYALNAGRLP, VFLHTGLIHVLVVSGLHVGLVFL, LLPRFYGEVLGLVGVLFYSAFLV, LSFRRYCSLCVLFFTGTLMLFFF, YSYSFWLSFFAVLYILLV, ALMVSLGAFTGTAPLIASFSFVT, and FAYALFGVLSLLTLFSFPPSLIL.

The protein resides in the cell membrane. This is an uncharacterized protein from Aquifex aeolicus (strain VF5).